A 186-amino-acid chain; its full sequence is Transcription factor pgmR (186 aa).

Residues 19–46 constitute a DNA-binding region (zn(2)-C6 fungal-type); it reads CDECGAAKLKCDRGHPSCGRCISLGLKC. Residues 52 to 98 are disordered; it reads RKAGKPRRDAQSATRPPPTPGDSGPPLDYNSFGPTSPPSSVGDGATL.

Its subcellular location is the nucleus. In terms of biological role, transcription factor that specifically regulates the expression of the pgm gene cluster that mediates the biosynthesis of cryptic naphthoquinones derived pigments responsible for the coloration of the fruiting bodies. The chain is Transcription factor pgmR from Aspergillus terreus (strain NIH 2624 / FGSC A1156).